Here is a 448-residue protein sequence, read N- to C-terminus: Cysteine--tRNA ligase (448 aa).

Position 29 (Cys29) interacts with Zn(2+). Residues 31 to 41 carry the 'HIGH' region motif; it reads PTVYNYIHIGN. Cys212, His237, and Glu241 together coordinate Zn(2+). Residues 269-273 carry the 'KMSKS' region motif; the sequence is KMSKS. Lys272 contacts ATP.

Belongs to the class-I aminoacyl-tRNA synthetase family. As to quaternary structure, monomer. Requires Zn(2+) as cofactor.

The protein resides in the cytoplasm. It catalyses the reaction tRNA(Cys) + L-cysteine + ATP = L-cysteinyl-tRNA(Cys) + AMP + diphosphate. This Streptococcus equi subsp. zooepidemicus (strain MGCS10565) protein is Cysteine--tRNA ligase.